The following is a 109-amino-acid chain: Fluoride-specific ion channel FluC 1 (109 aa).

The next 4 membrane-spanning stretches (helical) occupy residues 1–21 (MVIV…YFFS), 29–49 (LPLG…VFYN), 55–75 (EVYA…STLN), and 87–107 (VFYS…FLGI). Residues glycine 66 and threonine 69 each coordinate Na(+).

The protein belongs to the fluoride channel Fluc/FEX (TC 1.A.43) family.

The protein localises to the cell membrane. It catalyses the reaction fluoride(in) = fluoride(out). Its activity is regulated as follows. Na(+) is not transported, but it plays an essential structural role and its presence is essential for fluoride channel function. Its function is as follows. Fluoride-specific ion channel. Important for reducing fluoride concentration in the cell, thus reducing its toxicity. This chain is Fluoride-specific ion channel FluC 1, found in Streptococcus pneumoniae serotype 4 (strain ATCC BAA-334 / TIGR4).